The primary structure comprises 129 residues: Protein LLP homolog (129 aa).

Positions 1–21 are enriched in basic residues; it reads MAKSLRSKWKRKMRAEKRKKN. The disordered stretch occupies residues 1-27; that stretch reads MAKSLRSKWKRKMRAEKRKKNAPKEAS. Glycyl lysine isopeptide (Lys-Gly) (interchain with G-Cter in SUMO2) cross-links involve residues Lys-67 and Lys-74. The segment covering 100-122 has biased composition (basic residues); that stretch reads RQRKRLKAKREKRKGKSKAKAVK. The tract at residues 100–129 is disordered; that stretch reads RQRKRLKAKREKRKGKSKAKAVKVAKGLAW.

The protein belongs to the learning-associated protein family. Interacts with CTCF, MYO1C and with the transcriptional machinery, including RNA polymerase II and TBP.

The protein localises to the nucleus. It is found in the nucleolus. The protein resides in the chromosome. In hippocampal neurons, regulates dendritic and spine growth and synaptic transmission. The sequence is that of Protein LLP homolog (LLPH) from Homo sapiens (Human).